A 356-amino-acid polypeptide reads, in one-letter code: Putative KilA-N domain-containing protein R878 (356 aa).

Over residues M1–K12 the composition is skewed to basic residues. A disordered region spans residues M1–Y114. The segment covering S14–K46 has biased composition (low complexity). Over residues S66 to Y114 the composition is skewed to acidic residues. The KilA-N domain maps to N130–W239.

The sequence is that of Putative KilA-N domain-containing protein R878 from Acanthamoeba polyphaga (Amoeba).